A 324-amino-acid chain; its full sequence is Palmitoyltransferase SWF1 (324 aa).

Position 1 (Met1) is a topological domain, lumenal. A helical transmembrane segment spans residues Phe2–Phe22. The Cytoplasmic portion of the chain corresponds to Lys23–Lys49. The chain crosses the membrane as a helical span at residues Tyr50–Asn70. Residues Lys71–Glu84 lie on the Lumenal side of the membrane. A helical transmembrane segment spans residues Lys85–Val105. Residues Lys106–Tyr173 are Cytoplasmic-facing. The 51-residue stretch at Ala127–Leu177 folds into the DHHC domain. The chain crosses the membrane as a helical span at residues Ser174 to Phe194. The Lumenal segment spans residues Arg195 to Lys203. A helical membrane pass occupies residues Phe204–Tyr224. Residues Tyr225 to Asp324 are Cytoplasmic-facing.

The protein belongs to the DHHC palmitoyltransferase family. SWF1 subfamily.

It is found in the endoplasmic reticulum membrane. The catalysed reaction is L-cysteinyl-[protein] + hexadecanoyl-CoA = S-hexadecanoyl-L-cysteinyl-[protein] + CoA. In terms of biological role, palmitoyltransferase that targets several endosomal SNAREs. Palmitoylates the SNAREs at cysteine residues close to the cytoplasmic end of their transmembrane domain. May have a role in the cellular quality control of transmembrane domain-containing proteins. The chain is Palmitoyltransferase SWF1 (SWF1) from Kluyveromyces lactis (strain ATCC 8585 / CBS 2359 / DSM 70799 / NBRC 1267 / NRRL Y-1140 / WM37) (Yeast).